Here is a 98-residue protein sequence, read N- to C-terminus: NADH-ubiquinone oxidoreductase chain 4L (98 aa).

A run of 3 helical transmembrane segments spans residues 1–21, 29–49, and 61–81; these read MPYI…GTLM, SLLC…LLSL, and LILL…LVMI.

It belongs to the complex I subunit 4L family. In terms of assembly, core subunit of respiratory chain NADH dehydrogenase (Complex I) which is composed of 45 different subunits.

It localises to the mitochondrion inner membrane. It catalyses the reaction a ubiquinone + NADH + 5 H(+)(in) = a ubiquinol + NAD(+) + 4 H(+)(out). In terms of biological role, core subunit of the mitochondrial membrane respiratory chain NADH dehydrogenase (Complex I) which catalyzes electron transfer from NADH through the respiratory chain, using ubiquinone as an electron acceptor. Part of the enzyme membrane arm which is embedded in the lipid bilayer and involved in proton translocation. This Elephas maximus (Indian elephant) protein is NADH-ubiquinone oxidoreductase chain 4L (MT-ND4L).